The following is a 974-amino-acid chain: Ovochymase-2 (974 aa).

Residues 1-21 (MAETSIFPIMMLTVMIGVGRG) form the signal peptide. Positions 22-49 (VTDSPGRVSRCGERPAANTSVSYGLLSR) are cleaved as a propeptide — activation peptide. N39 carries an N-linked (GlcNAc...) asparagine glycan. A Peptidase S1 1 domain is found at 50–299 (IVGGTSAVKG…LLNWLSENLN (250 aa)). C75 and C91 form a disulfide bridge. H90 serves as the catalytic Charge relay system. Residues V112 and E117 each contribute to the Ca(2+) site. The Charge relay system role is filled by D140. Disulfide bonds link C174–C244, C205–C223, C234–C263, C312–C342, C369–C388, C435–C462, C489–C510, C615–C631, C713–C776, C741–C754, and C766–C795. Catalysis depends on S238, which acts as the Charge relay system. CUB domains lie at 312–425 (CSTN…YEAV) and 435–547 (CGSV…ISFV). The 230-residue stretch at 590-819 (LIKAEEAMPN…FIPWIMETIL (230 aa)) folds into the Peptidase S1 2 domain. Positions 590 to 974 (LIKAEEAMPN…WLSYSFHNQN (385 aa)) are cleaved as a propeptide — activation peptide. The N-linked (GlcNAc...) asparagine glycan is linked to N763. The interval 830–858 (EPHHPLFPPDKPSQQKALLPDSPPSSSSQ) is disordered. Residue N926 is glycosylated (N-linked (GlcNAc...) asparagine).

The protein belongs to the peptidase S1 family. Post-translationally, the catalytically inactive 107 kDa form is processed both N- and C-terminally to give rise to the 66 kDa catalytically active form and inactive forms of 82 kDa and 59 kDa. In terms of tissue distribution, expressed specifically in the cells lining the bottom of epithelial folds in the oviductal pars recta.

It localises to the secreted. The enzyme catalyses Preferential cleavage at 371-Gly-Ser-Arg-|-Trp-374 of glycoprotein gp43 in Xenopus laevis coelemic egg envelope to yield gp41.. Mediates gamete interaction by affecting the vitelline coat. The protein is Ovochymase-2 (OVCH2) of Bufo japonicus (Japanese common toad).